We begin with the raw amino-acid sequence, 214 residues long: Protein FAM167A (214 aa).

Disordered regions lie at residues 1–26 and 59–108; these read MSVP…PDDH and PFPR…LSTG. Residues 118-156 are a coiled coil; that stretch reads EAIAWLRKELTEMRLQDQQLARQLMRLRGDINKLKIEHT.

The protein belongs to the FAM167 (SEC) family. As to expression, expressed in skin, including primary keratinocytes, spleen, kidney, leukocytes, testis, lung, small intestine and prostate.

The polypeptide is Protein FAM167A (FAM167A) (Homo sapiens (Human)).